A 605-amino-acid chain; its full sequence is DNA primase (605 aa).

The CHC2-type zinc finger occupies 38–62 (CPFHDEKTPSFTVSEDKQICHCFGC). The region spanning 260–341 (DEIVLLEGFM…NVFVIQLPSG (82 aa)) is the Toprim domain. 3 residues coordinate Mg(2+): E266, D310, and D312.

Belongs to the DnaG primase family. As to quaternary structure, monomer. Interacts with DnaB. It depends on Zn(2+) as a cofactor. Requires Mg(2+) as cofactor.

It carries out the reaction ssDNA + n NTP = ssDNA/pppN(pN)n-1 hybrid + (n-1) diphosphate.. RNA polymerase that catalyzes the synthesis of short RNA molecules used as primers for DNA polymerase during DNA replication. This chain is DNA primase, found in Staphylococcus aureus (strain MW2).